The primary structure comprises 273 residues: Manganese catalase (273 aa).

Mn(2+) is bound at residue glutamate 35. The Ca(2+) site is built by aspartate 57 and aspartate 61. 4 residues coordinate Mn(2+): glutamate 66, histidine 69, glutamate 149, and histidine 182. Residues asparagine 220, serine 222, and glycine 224 each contribute to the Ca(2+) site. A disordered region spans residues 254 to 273 (EKPELKPAPPCVHNTLPGRE).

Belongs to the manganese catalase family. In terms of assembly, homohexamer. Requires Ca(2+) as cofactor. The cofactor is Mn(2+).

It catalyses the reaction 2 H2O2 = O2 + 2 H2O. Its activity is regulated as follows. Inhibited in the presence of EDTA. Resistant to inhibition by sodium azide. Its function is as follows. Catalyzes the decomposition of hydrogen peroxide into water and oxygen. No significant activity could be detected with any of the other tested substrates, including glutathione, pyrogallol, NADH, NADPH and o-dianisidine. This chain is Manganese catalase, found in Bacillus subtilis.